Consider the following 184-residue polypeptide: Exosome complex protein LRP1 (184 aa).

Residues 157 to 184 (DSTDHIRKASSKKSKRLDKVGKKKGGKK) form a disordered region. The segment covering 164-184 (KASSKKSKRLDKVGKKKGGKK) has biased composition (basic residues).

Belongs to the C1D family. Associates with nuclear form of the RNA exosome complex. Interacts with RRP4, RRP6, RRP45 and RRP46.

It is found in the nucleus. Functionally, required for exosome-dependent processing of pre-rRNA and small nucleolar RNA (snRNA) precursors. Involved in processing of 35S pre-rRNA at the A0, A1 and A2 sites. Required for activity of RRP6 in 7S pre-rRNA processing. Also has a role in 3'-processing of U4 and U5 small nuclear RNAs (snRNAs). Acts as a mRNA export factor. Mediates mRNA degradation upon UV irradiation. Maintains genome integrity where it is involved in both non-homologous end joining (NHEJ) and homologous recombination pathway repair of double strand DNA breaks. During NHEJ, required for joining 3'-overhanging ends. Also involved in telomere length regulation and maintenance. The protein is Exosome complex protein LRP1 (LRP1) of Saccharomyces cerevisiae (strain ATCC 204508 / S288c) (Baker's yeast).